We begin with the raw amino-acid sequence, 407 residues long: MSAATATAAPVPPPVGISNLPNQRYKIVNEEGGTFTVMLCGESGLGKTTFINTLFQTVLKRADGQQHRQEPIRKTVEIDITRALLEEKHFELRVNVIDTPGFGDNVNNNKAWQPLVDFIDDQHDSYMRQEQQPYRTKKFDLRVHAVLYFIRPTGHGLKPIDIETMKRLSTRANLIPVIAKADTLTAQELQQFKSRIRQVIEAQEIRIFTPPLDADSKEDAKSGSNPDSAAVEHARQLIEAMPFAIVGSEKKFDNGQGTQVVARKYPWGLVEIENDSHCDFRKLRALLLRTYLLDLISTTQEMHYETYRRLRLEGHENTGEGNEDFTLPAIAPARKLSHNPRYKEEENALKKYFTDQVKAEEQRFRQWEQNIVNERIRLNGDLEEIQGKVKKLEEQVKSLQVKKSHLK.

An N-acetylserine modification is found at S2. Residues 31 to 314 form the Septin-type G domain; that stretch reads EGGTFTVMLC…ETYRRLRLEG (284 aa). Positions 41–48 are G1 motif; that stretch reads GESGLGKT. GTP is bound by residues 41 to 48, T75, G101, 180 to 188, G247, and R263; these read GESGLGKT and KADTLTAQE. The interval 98–101 is G3 motif; it reads DTPG. Residues 179 to 182 form a G4 motif region; the sequence is AKAD. Residues 344-406 adopt a coiled-coil conformation; the sequence is EEENALKKYF…KSLQVKKSHL (63 aa).

This sequence belongs to the TRAFAC class TrmE-Era-EngA-EngB-Septin-like GTPase superfamily. Septin GTPase family. In terms of assembly, component of the septin complex which consists of CDC3, CDC10, CDC11, CDC12 and probably SHS1 and rearranges to a cortical collar of highly ordered filaments at the mother-bud-neck. A complex formed by CDC3, CDC10, CDC11 and CDC12 is capable of forming long filaments in vitro and the components seem to be present in a 2:2:2:2 arrangement in vivo. The filaments are proposed to be formed by the end-to-end polymerization of CDC3-CDC12-CDC11 complexes with CDC10 serving as a bridge to bundle the polymers into paired filaments. Component of the GIN4 complex composed of at least BNI5, CDC3, CDC10, CDC11, CDC12, GIN4, NAP1 and SHS1. Self-associates. Interacts with SYP1.

It localises to the membrane. The protein localises to the bud neck. Functionally, septins are GTPases involved in cytokinesis that assemble early in the cell cycle as a patch at the incipient bud site and form a ring approximate 15 minutes before bud emergence, which transforms into an hour-glass shaped collar of cortical filaments that spans both sides of the mother-bud neck. This collar persists until just before cytokinesis, when it splits into two rings that occupy opposite sides of the neck. The septins at the bud neck serve as a structural scaffold that recruits different components involved in diverse processes at specific stages during the cell cycle. Many proteins bind asymmetrically to the septin collar. The septin assembly is regulated by protein kinases GIN4 and/or CLA4. May act by recruiting MYO1 and HOF1, a protein involved in septation, to the site of cleavage. Septins are also involved in cell morphogenesis, bud site selection, chitin deposition, cell cycle regulation, cell compartmentalization and spore wall formation. In Saccharomyces cerevisiae (strain ATCC 204508 / S288c) (Baker's yeast), this protein is Cell division control protein 12 (CDC12).